The primary structure comprises 506 residues: UPF0522 protein A (506 aa).

The first 18 residues, 1–18 (MIKSLLLLISIIIGIVIS), serve as a signal peptide directing secretion. N-linked (GlcNAc...) asparagine glycans are attached at residues N145, N155, N330, N366, N418, and N427.

The protein belongs to the UPF0522 family.

It localises to the secreted. This chain is UPF0522 protein A, found in Dictyostelium discoideum (Social amoeba).